Consider the following 56-residue polypeptide: Large ribosomal subunit protein bL32 (56 aa).

Over residues Met-1 to Arg-16 the composition is skewed to basic residues. Positions Met-1–Leu-22 are disordered.

This sequence belongs to the bacterial ribosomal protein bL32 family.

In Aliivibrio salmonicida (strain LFI1238) (Vibrio salmonicida (strain LFI1238)), this protein is Large ribosomal subunit protein bL32.